The following is a 110-amino-acid chain: DNA-directed RNA polymerase subunit omega (110 aa).

Belongs to the RNA polymerase subunit omega family. As to quaternary structure, the RNAP catalytic core consists of 2 alpha, 1 beta, 1 beta' and 1 omega subunit. When a sigma factor is associated with the core the holoenzyme is formed, which can initiate transcription.

The enzyme catalyses RNA(n) + a ribonucleoside 5'-triphosphate = RNA(n+1) + diphosphate. Promotes RNA polymerase assembly. Latches the N- and C-terminal regions of the beta' subunit thereby facilitating its interaction with the beta and alpha subunits. The protein is DNA-directed RNA polymerase subunit omega (rpoZ) of Mycobacterium bovis (strain ATCC BAA-935 / AF2122/97).